A 237-amino-acid chain; its full sequence is Uridylate kinase (237 aa).

An ATP-binding site is contributed by 10–13 (KFSG). The tract at residues 18 to 23 (GDSGFG) is involved in allosteric activation by GTP. Position 52 (Gly52) interacts with UMP. ATP contacts are provided by Gly53 and Arg57. UMP contacts are provided by residues Asp73 and 134–141 (TGNPFFTT). ATP contacts are provided by Thr161, Tyr167, and Asp170.

The protein belongs to the UMP kinase family. In terms of assembly, homohexamer.

It localises to the cytoplasm. It catalyses the reaction UMP + ATP = UDP + ADP. The protein operates within pyrimidine metabolism; CTP biosynthesis via de novo pathway; UDP from UMP (UMPK route): step 1/1. With respect to regulation, allosterically activated by GTP. Inhibited by UTP. Its function is as follows. Catalyzes the reversible phosphorylation of UMP to UDP. This is Uridylate kinase from Campylobacter hominis (strain ATCC BAA-381 / DSM 21671 / CCUG 45161 / LMG 19568 / NCTC 13146 / CH001A).